A 246-amino-acid polypeptide reads, in one-letter code: Probable transcriptional regulatory protein CKO_01097 (246 aa).

The segment at 1 to 20 is disordered; sequence MAGHSKWANTRHRKAAQDAK.

This sequence belongs to the TACO1 family.

The protein resides in the cytoplasm. The chain is Probable transcriptional regulatory protein CKO_01097 from Citrobacter koseri (strain ATCC BAA-895 / CDC 4225-83 / SGSC4696).